Consider the following 416-residue polypeptide: Histidine--tRNA ligase (416 aa).

The protein belongs to the class-II aminoacyl-tRNA synthetase family. Homodimer.

It localises to the cytoplasm. The enzyme catalyses tRNA(His) + L-histidine + ATP = L-histidyl-tRNA(His) + AMP + diphosphate + H(+). This Dictyoglomus thermophilum (strain ATCC 35947 / DSM 3960 / H-6-12) protein is Histidine--tRNA ligase.